The chain runs to 244 residues: Mitochondrial import inner membrane translocase subunit Tim21 (244 aa).

A mitochondrion-targeting transit peptide spans Met-1–Cys-18. The segment at Val-69–Gln-89 is disordered. The helical transmembrane segment at Phe-108 to Ile-128 threads the bilayer.

Belongs to the TIM21 family. In terms of assembly, component of the TIM23 complex. Component of the MITRAC (mitochondrial translation regulation assembly intermediate of cytochrome c oxidase complex) complex, the core components of this complex being COA3/MITRAC12 and COX14. Interacts with COA3 and MT-CO1/COX1.

It localises to the mitochondrion membrane. Its function is as follows. Participates in the translocation of transit peptide-containing proteins across the mitochondrial inner membrane. Also required for assembly of mitochondrial respiratory chain complex I and complex IV as component of the MITRAC (mitochondrial translation regulation assembly intermediate of cytochrome c oxidase complex) complex. Probably shuttles between the presequence translocase and respiratory-chain assembly intermediates in a process that promotes incorporation of early nuclear-encoded subunits into these complexes. In Bos taurus (Bovine), this protein is Mitochondrial import inner membrane translocase subunit Tim21 (TIMM21).